The primary structure comprises 323 residues: Prostaglandin-E(2) 9-reductase (323 aa).

Residues 23–24 (TY) and Asp-50 each bind NADP(+). Tyr-24 contributes to the substrate binding site. The active-site Proton donor is the Tyr-55. His-117 lines the substrate pocket. Residues 166–167 (SN), Gln-190, 216–221 (YSALGS), and 270–280 (KSFTEKRIKEN) contribute to the NADP(+) site.

This sequence belongs to the aldo/keto reductase family.

The protein localises to the cytoplasm. It carries out the reaction prostaglandin F2alpha + NADP(+) = prostaglandin E2 + NADPH + H(+). The catalysed reaction is (17R,20S)-17,20-dihydroxypregn-4-en-3-one + NADP(+) = 17alpha-hydroxyprogesterone + NADPH + H(+). The enzyme catalyses (17R,20S)-17,20-dihydroxypregn-4-en-3-one + NAD(+) = 17alpha-hydroxyprogesterone + NADH + H(+). Functionally, can convert prostaglandin E2 to prostaglandin F2-alpha. The polypeptide is Prostaglandin-E(2) 9-reductase (AKR1C5) (Oryctolagus cuniculus (Rabbit)).